We begin with the raw amino-acid sequence, 741 residues long: Transketolase-1, chloroplastic (741 aa).

The transit peptide at Met1–Ala66 directs the protein to the chloroplast. The tract at residues Gly22–Ala51 is disordered. Ala67 carries the post-translational modification N-acetylalanine. A substrate-binding site is contributed by His103. Residues His143 and Gly192–Leu194 each bind thiamine diphosphate. Residue Asp233 participates in Mg(2+) binding. Thiamine diphosphate is bound by residues Gly234 and Asn263. The Mg(2+) site is built by Asn263 and Ile265. His340 provides a ligand contact to substrate. Position 340 (His340) interacts with thiamine diphosphate. Ser428 carries the phosphoserine modification. Substrate is bound by residues Arg434 and Ser461. Thiamine diphosphate-binding residues include Glu488 and Phe515. Glu488 functions as the Proton donor in the catalytic mechanism. Substrate is bound by residues His539, Asp547, and Arg598.

The protein belongs to the transketolase family. Homodimer. Mg(2+) serves as cofactor. The cofactor is Ca(2+). Requires Mn(2+) as cofactor. Co(2+) is required as a cofactor. It depends on thiamine diphosphate as a cofactor.

It localises to the plastid. The protein localises to the chloroplast stroma. The enzyme catalyses D-sedoheptulose 7-phosphate + D-glyceraldehyde 3-phosphate = aldehydo-D-ribose 5-phosphate + D-xylulose 5-phosphate. It participates in carbohydrate biosynthesis; Calvin cycle. In terms of biological role, catalyzes the reversible transfer of a two-carbon ketol group from fructose-6-phosphate or sedoheptulose-7-phosphate to glyceraldehyde-3-phosphate to yield xylulose-5-phosphate and erythrose-4-phosphate or ribose-5-phosphate, respectively. Could act as a stress sensor involved in adaptation process. This is Transketolase-1, chloroplastic (TKL-1) from Arabidopsis thaliana (Mouse-ear cress).